The sequence spans 53 residues: UPF0391 membrane protein Bmul_5473/BMULJ_06024 (53 aa).

Helical transmembrane passes span 5–25 (ALIF…GIAA) and 30–50 (IAKI…LLGV).

This sequence belongs to the UPF0391 family.

The protein resides in the cell membrane. The polypeptide is UPF0391 membrane protein Bmul_5473/BMULJ_06024 (Burkholderia multivorans (strain ATCC 17616 / 249)).